Consider the following 834-residue polypeptide: Periplasmic nitrate reductase (834 aa).

The tat-type signal signal peptide spans 1 to 29; the sequence is MNLTRREFAKANAAAIAAAAAGLPILVRA. The 57-residue stretch at 41-97 folds into the 4Fe-4S Mo/W bis-MGD-type domain; sequence LDWNKAPCRFCGTGCSVMVATRDGQVVATHGDIKAEVNRGINCVKGYFLSKIMYGSD. [4Fe-4S] cluster-binding residues include cysteine 48, cysteine 51, cysteine 55, and cysteine 83. Residues lysine 85, glutamine 152, asparagine 177, cysteine 181, 214-221, 245-249, 264-266, methionine 375, glutamine 379, asparagine 485, 511-512, lysine 534, aspartate 561, and 721-730 contribute to the Mo-bis(molybdopterin guanine dinucleotide) site; these read WGSNMAEM, STFEH, QTD, SD, and TGRVLEHWHT. Phenylalanine 797 contributes to the substrate binding site. Mo-bis(molybdopterin guanine dinucleotide) contacts are provided by asparagine 805 and lysine 822.

This sequence belongs to the prokaryotic molybdopterin-containing oxidoreductase family. NasA/NapA/NarB subfamily. Component of the periplasmic nitrate reductase NapAB complex composed of NapA and NapB. Requires [4Fe-4S] cluster as cofactor. Mo-bis(molybdopterin guanine dinucleotide) serves as cofactor. Predicted to be exported by the Tat system. The position of the signal peptide cleavage has not been experimentally proven.

It is found in the periplasm. It carries out the reaction 2 Fe(II)-[cytochrome] + nitrate + 2 H(+) = 2 Fe(III)-[cytochrome] + nitrite + H2O. Its function is as follows. Catalytic subunit of the periplasmic nitrate reductase complex NapAB. Receives electrons from NapB and catalyzes the reduction of nitrate to nitrite. This chain is Periplasmic nitrate reductase, found in Pseudomonas paraeruginosa (strain DSM 24068 / PA7) (Pseudomonas aeruginosa (strain PA7)).